Here is a 191-residue protein sequence, read N- to C-terminus: Thymidylate kinase (191 aa).

Residue 7 to 14 (GIDTAGKS) coordinates ATP.

The protein belongs to the thymidylate kinase family.

The catalysed reaction is dTMP + ATP = dTDP + ADP. Phosphorylation of dTMP to form dTDP in both de novo and salvage pathways of dTTP synthesis. The polypeptide is Thymidylate kinase (Sulfurimonas denitrificans (strain ATCC 33889 / DSM 1251) (Thiomicrospira denitrificans (strain ATCC 33889 / DSM 1251))).